A 217-amino-acid chain; its full sequence is Elongation factor Ts (217 aa).

Residues 82–85 (TDFV) are involved in Mg(2+) ion dislocation from EF-Tu.

The protein belongs to the EF-Ts family.

The protein localises to the cytoplasm. Functionally, associates with the EF-Tu.GDP complex and induces the exchange of GDP to GTP. It remains bound to the aminoacyl-tRNA.EF-Tu.GTP complex up to the GTP hydrolysis stage on the ribosome. The chain is Elongation factor Ts from Prochlorococcus marinus (strain SARG / CCMP1375 / SS120).